The following is a 202-amino-acid chain: Na(+)-translocating NADH-quinone reductase subunit E (202 aa).

Transmembrane regions (helical) follow at residues 11-31 (AVFIENLALSFFLGMCTFLAV), 39-59 (FGLGVAVIVVLGISVPVNNLI), 81-101 (FLKFLTFIGVIAAIVQILEMA), 114-134 (GIFLPLITVNCAIFGGVAFMV), 144-164 (VVFGIGSGVGWALAIVALAAV), and 180-200 (LGITFISVGLIGLGFMSFSGV).

It belongs to the NqrDE/RnfAE family. In terms of assembly, composed of six subunits; NqrA, NqrB, NqrC, NqrD, NqrE and NqrF.

The protein localises to the cell inner membrane. It catalyses the reaction a ubiquinone + n Na(+)(in) + NADH + H(+) = a ubiquinol + n Na(+)(out) + NAD(+). NQR complex catalyzes the reduction of ubiquinone-1 to ubiquinol by two successive reactions, coupled with the transport of Na(+) ions from the cytoplasm to the periplasm. NqrA to NqrE are probably involved in the second step, the conversion of ubisemiquinone to ubiquinol. This Idiomarina loihiensis (strain ATCC BAA-735 / DSM 15497 / L2-TR) protein is Na(+)-translocating NADH-quinone reductase subunit E.